A 248-amino-acid chain; its full sequence is Adenylate kinase (248 aa).

37 to 42 (GAGKGT) contributes to the ATP binding site. The interval 57-86 (SPGNLLREEMNRNSPITAQIKDYVSKGQLV) is NMP. Residues arginine 63, 84–86 (QLV), 111–114 (GFPR), and glutamine 118 contribute to the AMP site. The LID stretch occupies residues 149–181 (GRRFDPITGNTYHIIYDPPPPDIADRVVVRTDD). Residue arginine 150 coordinates ATP. Residues arginine 178 and arginine 189 each contribute to the AMP site.

It belongs to the adenylate kinase family. Monomer.

Its subcellular location is the cytoplasm. The catalysed reaction is AMP + ATP = 2 ADP. In terms of biological role, catalyzes the reversible transfer of the terminal phosphate group between ATP and AMP. Plays an important role in cellular energy homeostasis and in adenine nucleotide metabolism. In Giardia intestinalis (Giardia lamblia), this protein is Adenylate kinase.